The sequence spans 1313 residues: MIFTILNVLTRAMLVMSMYSLTTWDSTSRNDMCFSNDSPLEGLVYYWETHSKRHDYKKQESQRCRVGDSDKKMITNVTIISLISEIQKSISELSLSCVNDDNSTGQVLTFNGLEDTIRGDYIVDCVTGLYQSDIGVGVGLGRTHHGHQQMKNKAVVIDEKERMISLLETQQSENDIKMQVLMSEIEQLKNQLSKKRNERGQEKRDAEKVMSDLMARNSDLRKHNDILTAEISQMKNKNTIQRNKNTVSTTVVPAILSVALLSSSVAPIIAAPPDSPMINPWPHAKNRVGTGMYKYDENDDSGCRPIRYGVSCIGFDFMLKMDKYPFFNAFIGHKTPLESFADKIIEKEEETCEIGTNKEFKCFEERAYIKGTCPTNINAVHYIDNKGKLRYVKCKENLEMTEDCAFCRKIKKKAGQSVQVQKTSVPLQDAICQENSDTYSGPKIPFKGVCKIGLIKYKECKFKTSSYETVSFITLKEKGKIYIEHLMLKNIEVVTNVSFVCYEHVGQDEQEVEHRALKRVSVNDCKIVDNSKQKICTGDHVFCEKYDCSTSYPDVTCIHAPGSGPLYINLMGSWIKPQCVGYERVLVDREVKQPLLAPEQNCDTCVSECLDEGVHIKSTGFEITSAVACSHGSCISAHQEPSTSVIVPYPGLLASVGGRIGIHLSHTSDSASVHMVVVCPPRDSCAAHNCLLCYHGILNYQCHSTLSAILTSFLLILFIYTVFSVTTNILYVLRLIPKQLKSPVGWLKLFINWLLTALRIKTRNVMRRINQRIGWVDHHDVERPRHREPMRRFKTTLLLTLIMMTGGNACSNTVVANSKQTRCVQEGSNTKCSITATITLRAGVIGAESCFIIKGPMENQQKTISIKTISSETVCREGSSFWTSLYIPSCLSSRRCHLVGDCVGNKCQSWRDDQLSREFSGVKDNHIMNENKCFEQCGAIGCGCFNINPSCLYVHAYLKSARNEAVRVFSCSDWVHRVSFEVKGPDGETELVTLGSPGTKFLNWGTLSLSLDAEGISGTNSISFLESSKGGFALYDEGYNEIPREGFLGEIRCSSESAAISAHKSCIRAPGLIKYKPMTDQIECTASLVDPFAIFLKGSLPQTRNGQTFTSTKDKKTVQAFTNGAIKALLSINLDDHEIVFINKVKNCDATFLNVSGCYSCDYGAHVCVKVKSSESADFFAESEDKTTVLSFPIQSGTHDYCQVLHFQKPLVDERLSYSCGSEPKLIVIKGTLVCMGVYDFRNKTGGSSTVVNPSEGAWSISNWFSGLLDWLGGPMKAILKILGFIAIGIVCFVLFMILIRIAVNSINIKKKN.

An N-terminal signal peptide occupies residues 1–17; that stretch reads MIFTILNVLTRAMLVMS. Residues 18–712 lie on the Lumenal side of the membrane; it reads MYSLTTWDST…HSTLSAILTS (695 aa). Residues Asn76 and Asn102 are each glycosylated (N-linked (GlcNAc...) asparagine; by host). Residues 178–237 are a coiled coil; that stretch reads MQVLMSEIEQLKNQLSKKRNERGQEKRDAEKVMSDLMARNSDLRKHNDILTAEISQMKNK. Residues 250-270 are internal signal sequence for glycoprotein N; that stretch reads TVVPAILSVALLSSSVAPIIA. Intrachain disulfides connect Cys303-Cys312, Cys352-Cys362, Cys373-Cys404, Cys394-Cys407, Cys432-Cys579, Cys450-Cys460, Cys501-Cys557, Cys525-Cys536, Cys543-Cys548, Cys602-Cys605, Cys609-Cys679, and Cys629-Cys634. N-linked (GlcNAc...) asparagine; by host glycosylation occurs at Asn496. The helical transmembrane segment at 713–733 threads the bilayer; sequence FLLILFIYTVFSVTTNILYVL. The interval 731–773 is golgi retention signal; it reads YVLRLIPKQLKSPVGWLKLFINWLLTALRIKTRNVMRRINQRI. At 734-791 the chain is on the cytoplasmic side; it reads RLIPKQLKSPVGWLKLFINWLLTALRIKTRNVMRRINQRIGWVDHHDVERPRHREPMR. Positions 769–773 are important for correct targeting of the glycoproteins to the Golgi complex but not for heterodimerization; that stretch reads INQRI. The segment at 793–809 is internal signal sequence for glycoprotein C; sequence FKTTLLLTLIMMTGGNA. 12 disulfide bridges follow: Cys810–Cys850, Cys823–Cys832, Cys875–Cys971, Cys890–Cys1084, Cys896–Cys944, Cys902–Cys951, Cys907–Cys933, Cys937–Cys942, Cys1053–Cys1066, Cys1148–Cys1220, Cys1158–Cys1161, and Cys1168–Cys1202. Over 810–1278 the chain is Lumenal; sequence CSNTVVANSK…LDWLGGPMKA (469 aa). A fusion loop region spans residues 896–902; that stretch reads CHLVGDC. The fusion loop stretch occupies residues 938 to 949; it reads GAIGCGCFNINP. A glycan (N-linked (GlcNAc...) asparagine; by host) is linked at Asn1154. A glycan (N-linked (GlcNAc...) asparagine; by host) is linked at Asn1243. A helical transmembrane segment spans residues 1279 to 1299; the sequence is ILKILGFIAIGIVCFVLFMIL. Residues 1300-1313 lie on the Cytoplasmic side of the membrane; it reads IRIAVNSINIKKKN.

The protein belongs to the phlebovirus envelope glycoprotein family. In terms of assembly, heterodimer with glycoprotein C. Interacts with nucleocapsid protein N and with the polymerase L in order to package them into virus particles. As to quaternary structure, heterodimer with glycoprotein C. Homotrimer (postfusion). Interacts with nucleocapsid protein N and with the polymerase L in order to package them into virus particles. Interacts with host E3 ubiquitin-protein ligase UBR4; this interaction is important for viral RNA production. Specific enzymatic cleavages in vivo yield mature proteins including NSm protein, Glycoprotein C, and Glycoprotein N. In terms of processing, glycosylated. The glycans can attach to host CD209/DC-SIGN, and may play a role in virus entry into dendritic cells. Post-translationally, palmitoylated.

It localises to the virion membrane. The protein resides in the host Golgi apparatus membrane. It is found in the host endoplasmic reticulum membrane. In terms of biological role, structural component of the virion that interacts with glycoprotein C. It shields the hydrophobic fusion loops of the glycoprotein C, preventing premature fusion. The glycoprotein protrusions are arranged on an icosahedral lattice, with T=12 triangulation. They are able to attach the virion to the host cell receptor CD209/DC-SIGN and to promote fusion of membranes with the late endosome after endocytosis of the virion. Plays a role in the packaging of ribonucleoproteins and polymerase during virus assembly. Structural component of the virion that interacts with glycoprotein N. Acts as a class II fusion protein that is activated upon acidification and subsequent repositioning of the glycoprotein N. The glycoprotein protrusions are arranged on an icosahedral lattice, with T=12 triangulation. They are able to attach the virion to the host cell receptor CD209/DC-SIGN and to promote fusion of membranes with the late endosome after endocytosis of the virion. Functionally, plays a role for virus dissemination in mosquitoes. The chain is Envelopment polyprotein (GP) from Homo sapiens (Human).